The sequence spans 283 residues: NAD kinase (283 aa).

Aspartate 67 serves as the catalytic Proton acceptor. NAD(+)-binding positions include 67-68 (DG), 141-142 (ND), arginine 152, aspartate 171, 182-187 (TAYSLS), and glutamine 241.

The protein belongs to the NAD kinase family. A divalent metal cation is required as a cofactor.

It is found in the cytoplasm. It carries out the reaction NAD(+) + ATP = ADP + NADP(+) + H(+). Its function is as follows. Involved in the regulation of the intracellular balance of NAD and NADP, and is a key enzyme in the biosynthesis of NADP. Catalyzes specifically the phosphorylation on 2'-hydroxyl of the adenosine moiety of NAD to yield NADP. In Heliobacterium modesticaldum (strain ATCC 51547 / Ice1), this protein is NAD kinase.